The primary structure comprises 93 residues: Acylphosphatase (93 aa).

The 87-residue stretch at Arg7–Arg93 folds into the Acylphosphatase-like domain. Catalysis depends on residues Arg22 and Asn40.

This sequence belongs to the acylphosphatase family.

The enzyme catalyses an acyl phosphate + H2O = a carboxylate + phosphate + H(+). This Mycolicibacterium vanbaalenii (strain DSM 7251 / JCM 13017 / BCRC 16820 / KCTC 9966 / NRRL B-24157 / PYR-1) (Mycobacterium vanbaalenii) protein is Acylphosphatase (acyP).